The following is a 264-amino-acid chain: Thymidylate synthase (264 aa).

Arg21 serves as a coordination point for dUMP. His51 is a binding site for (6R)-5,10-methylene-5,6,7,8-tetrahydrofolate. 126–127 (RR) provides a ligand contact to dUMP. Residue Cys146 is the Nucleophile of the active site. Residues 166-169 (RSAD), Asn177, and 207-209 (HIY) each bind dUMP. Asp169 contributes to the (6R)-5,10-methylene-5,6,7,8-tetrahydrofolate binding site. Ala263 contributes to the (6R)-5,10-methylene-5,6,7,8-tetrahydrofolate binding site.

Belongs to the thymidylate synthase family. Bacterial-type ThyA subfamily. Homodimer.

The protein localises to the cytoplasm. The enzyme catalyses dUMP + (6R)-5,10-methylene-5,6,7,8-tetrahydrofolate = 7,8-dihydrofolate + dTMP. The protein operates within pyrimidine metabolism; dTTP biosynthesis. Functionally, catalyzes the reductive methylation of 2'-deoxyuridine-5'-monophosphate (dUMP) to 2'-deoxythymidine-5'-monophosphate (dTMP) while utilizing 5,10-methylenetetrahydrofolate (mTHF) as the methyl donor and reductant in the reaction, yielding dihydrofolate (DHF) as a by-product. This enzymatic reaction provides an intracellular de novo source of dTMP, an essential precursor for DNA biosynthesis. This chain is Thymidylate synthase, found in Coxiella burnetii (strain Dugway 5J108-111).